We begin with the raw amino-acid sequence, 462 residues long: ATP synthase subunit beta (462 aa).

152–159 (GGAGVGKT) contributes to the ATP binding site.

It belongs to the ATPase alpha/beta chains family. In terms of assembly, F-type ATPases have 2 components, CF(1) - the catalytic core - and CF(0) - the membrane proton channel. CF(1) has five subunits: alpha(3), beta(3), gamma(1), delta(1), epsilon(1). CF(0) has three main subunits: a(1), b(2) and c(9-12). The alpha and beta chains form an alternating ring which encloses part of the gamma chain. CF(1) is attached to CF(0) by a central stalk formed by the gamma and epsilon chains, while a peripheral stalk is formed by the delta and b chains.

Its subcellular location is the cell inner membrane. The catalysed reaction is ATP + H2O + 4 H(+)(in) = ADP + phosphate + 5 H(+)(out). Functionally, produces ATP from ADP in the presence of a proton gradient across the membrane. The catalytic sites are hosted primarily by the beta subunits. This is ATP synthase subunit beta from Tolumonas auensis (strain DSM 9187 / NBRC 110442 / TA 4).